The primary structure comprises 383 residues: Spermidine/putrescine import ATP-binding protein PotA (383 aa).

The 235-residue stretch at 12–246 (IALRDISKVY…PSTPFVAGFI (235 aa)) folds into the ABC transporter domain. Residue 48 to 55 (GPSGCGKT) coordinates ATP.

Belongs to the ABC transporter superfamily. Spermidine/putrescine importer (TC 3.A.1.11.1) family. The complex is composed of two ATP-binding proteins (PotA), two transmembrane proteins (PotB and PotC) and a solute-binding protein (PotD).

The protein resides in the cell membrane. The catalysed reaction is ATP + H2O + polyamine-[polyamine-binding protein]Side 1 = ADP + phosphate + polyamineSide 2 + [polyamine-binding protein]Side 1.. In terms of biological role, part of the ABC transporter complex PotABCD involved in spermidine/putrescine import. Responsible for energy coupling to the transport system. The polypeptide is Spermidine/putrescine import ATP-binding protein PotA (Acidothermus cellulolyticus (strain ATCC 43068 / DSM 8971 / 11B)).